The chain runs to 292 residues: Protein CHLOROPLAST ENHANCING STRESS TOLERANCE, chloroplastic (292 aa).

Over residues 1–15 (MALLSPPSPPPPLPP) the composition is skewed to pro residues. The transit peptide at 1–67 (MALLSPPSPP…RSSRRRRRVA (67 aa)) directs the protein to the chloroplast. Disordered stretches follow at residues 1 to 119 (MALL…DLED) and 206 to 225 (MEAPKKKSKPGKSVYAKATD). 2 stretches are compositionally biased toward low complexity: residues 49-58 (STANARAYSR) and 94-107 (ASSDGAAGDIASSA). A helical membrane pass occupies residues 267–287 (ALYLLTAFPVIIGISVVLILF).

The protein belongs to the Y3IP1/CEST family.

The protein localises to the plastid. It is found in the chloroplast thylakoid membrane. In terms of biological role, involved in light-induced chloroplast development and growth. Involved in the plant response to abiotic and photooxidative stresses. May be involved in the suppression of photooxidative damage. In Oryza sativa subsp. indica (Rice), this protein is Protein CHLOROPLAST ENHANCING STRESS TOLERANCE, chloroplastic.